The primary structure comprises 352 residues: UDP-3-O-acylglucosamine N-acyltransferase (352 aa).

The active-site Proton acceptor is the histidine 246.

It belongs to the transferase hexapeptide repeat family. LpxD subfamily. In terms of assembly, homotrimer.

The catalysed reaction is a UDP-3-O-[(3R)-3-hydroxyacyl]-alpha-D-glucosamine + a (3R)-hydroxyacyl-[ACP] = a UDP-2-N,3-O-bis[(3R)-3-hydroxyacyl]-alpha-D-glucosamine + holo-[ACP] + H(+). It participates in bacterial outer membrane biogenesis; LPS lipid A biosynthesis. Catalyzes the N-acylation of UDP-3-O-acylglucosamine using 3-hydroxyacyl-ACP as the acyl donor. Is involved in the biosynthesis of lipid A, a phosphorylated glycolipid that anchors the lipopolysaccharide to the outer membrane of the cell. The chain is UDP-3-O-acylglucosamine N-acyltransferase from Chlorobium luteolum (strain DSM 273 / BCRC 81028 / 2530) (Pelodictyon luteolum).